Reading from the N-terminus, the 294-residue chain is Bifunctional protein FolD (294 aa).

Residues 166-168 (GRS), S191, and I232 each bind NADP(+).

Belongs to the tetrahydrofolate dehydrogenase/cyclohydrolase family. In terms of assembly, homodimer.

It carries out the reaction (6R)-5,10-methylene-5,6,7,8-tetrahydrofolate + NADP(+) = (6R)-5,10-methenyltetrahydrofolate + NADPH. It catalyses the reaction (6R)-5,10-methenyltetrahydrofolate + H2O = (6R)-10-formyltetrahydrofolate + H(+). Its pathway is one-carbon metabolism; tetrahydrofolate interconversion. Functionally, catalyzes the oxidation of 5,10-methylenetetrahydrofolate to 5,10-methenyltetrahydrofolate and then the hydrolysis of 5,10-methenyltetrahydrofolate to 10-formyltetrahydrofolate. The protein is Bifunctional protein FolD of Bradyrhizobium sp. (strain ORS 278).